The primary structure comprises 558 residues: Potassium-transporting ATPase potassium-binding subunit 1 (558 aa).

12 helical membrane passes run 1 to 21 (MEIILFLTMMVMITYVFSGYL), 66 to 86 (FNGFMGFITFVLLIVQQWLFL), 127 to 147 (MIVMTYLMFTSSASGYAVCIA), 166 to 186 (IVRFIVRVLLPLSCLISILLM), 245 to 265 (IWSNFIEMGSMMLLPMSMLFL), 281 to 301 (ALILFVAMFFIFIAILTLTMW), 327 to 347 (FGAGLSALFTVITTAFTTGSV), 354 to 374 (LTPIGGLGPMVLMMLNVVFGG), 377 to 397 (VGLMNLLIFVLLTVFICSLMV), 416 to 436 (IVLVFLIHPILILVFSALAFM), 482 to 502 (ISTGIIMLLSRYIPIILQLMI), and 531 to 551 (IVFIVLLSGLTFIPVLLLGPI).

The protein belongs to the KdpA family. In terms of assembly, the system is composed of three essential subunits: KdpA, KdpB and KdpC.

Its subcellular location is the cell membrane. Part of the high-affinity ATP-driven potassium transport (or Kdp) system, which catalyzes the hydrolysis of ATP coupled with the electrogenic transport of potassium into the cytoplasm. This subunit binds the extracellular potassium ions and delivers the ions to the membrane domain of KdpB through an intramembrane tunnel. The chain is Potassium-transporting ATPase potassium-binding subunit 1 from Staphylococcus aureus (strain Mu50 / ATCC 700699).